A 405-amino-acid polypeptide reads, in one-letter code: Squamosa promoter-binding-like protein 6 (405 aa).

Residues 121–198 (NPLCQVYGCS…AGHNERRRKP (78 aa)) form an SBP-type zinc finger. 8 residues coordinate Zn(2+): C124, C129, C146, H149, C165, C168, H172, and C184. The Bipartite nuclear localization signal motif lies at 181–197 (KRSCRRRLAGHNERRRK).

Zn(2+) is required as a cofactor.

Its subcellular location is the nucleus. Its function is as follows. Trans-acting factor that binds specifically to the consensus nucleotide sequence 5'-TNCGTACAA-3'. The protein is Squamosa promoter-binding-like protein 6 (SPL6) of Arabidopsis thaliana (Mouse-ear cress).